We begin with the raw amino-acid sequence, 1078 residues long: Lon protease homolog, mitochondrial (1078 aa).

Residues 1 to 27 constitute a mitochondrion transit peptide; sequence MIKASKCNKPRALFLVRVSIPRTFIRN. The span at 71 to 123 shows a compositional bias: basic and acidic residues; sequence SEKEKQPSTDKSNDKDKPSRKEKGKDKEKENEEKKDINMDEKYEINEETDTKP. Residues 71 to 179 form a disordered region; that stretch reads SEKEKQPSTD…KEFLSPSDSG (109 aa). Over residues 127–157 the composition is skewed to low complexity; sequence PNNPVSSKSNISSSSGGDNNNNNNNNNNNND. Positions 158–172 are enriched in basic and acidic residues; sequence SDGKNDDGSPKDKEF. The Lon N-terminal domain maps to 182–400; the sequence is PPFLAIAMKD…LSLQLLQVEA (219 aa). ATP is bound at residue 548–555; that stretch reads GPPGTGKT. Residues 792-825 are disordered; the sequence is NSPIEYIQSNTEVKAETTTESQQEQEKEKEKDEE. Residues 815–825 show a composition bias toward basic and acidic residues; sequence EQEKEKEKDEE. Residues 861-1049 form the Lon proteolytic domain; it reads TLNPGVATGL…SEVFEHLFQG (189 aa). Residues Ser-955 and Lys-998 contribute to the active site.

The protein belongs to the peptidase S16 family. In terms of assembly, homohexamer or homoheptamer. Organized in a ring with a central cavity.

Its subcellular location is the mitochondrion matrix. It catalyses the reaction Hydrolysis of proteins in presence of ATP.. ATP-dependent serine protease that mediates the selective degradation of misfolded, unassembled or oxidatively damaged polypeptides as well as certain short-lived regulatory proteins in the mitochondrial matrix. May also have a chaperone function in the assembly of inner membrane protein complexes. Participates in the regulation of mitochondrial gene expression and in the maintenance of the integrity of the mitochondrial genome. Binds to mitochondrial DNA in a site-specific manner. The protein is Lon protease homolog, mitochondrial of Candida albicans (strain SC5314 / ATCC MYA-2876) (Yeast).